The chain runs to 2488 residues: PKS-NRPS hybrid synthetase swnK (2488 aa).

An adenylation (A) domain region spans residues Phe-33–Arg-422. A Carrier 1 domain is found at Gln-523–Gly-598. The residue at position 558 (Ser-558) is an O-(pantetheine 4'-phosphoryl)serine. The region spanning His-616–Glu-1039 is the Ketosynthase family 3 (KS3) domain. Active-site for beta-ketoacyl synthase activity residues include Cys-785, His-920, and His-960. Positions Leu-1149–Val-1471 are malonyl-CoA:ACP transacylase (MAT) domain. Residues Gly-1723–Ala-1901 form a ketoreductase (KR) domain region. A Carrier 2 domain is found at Ser-2002–Leu-2077. Ser-2037 is subject to O-(pantetheine 4'-phosphoryl)serine. A disordered region spans residues Ser-2084–Ala-2103. Residues Val-2136–Thr-2364 form a thioester reductase (TE) domain region.

In the N-terminal section; belongs to the NRP synthetase family.

It catalyses the reaction L-pipecolate + malonyl-CoA + 2 NADPH + 4 H(+) = (8aS)-octahydroindolizin-1-one + CO2 + 2 NADP(+) + CoA + 2 H2O. The enzyme catalyses L-pipecolate + malonyl-CoA + 3 NADPH + 5 H(+) = (1R,8aS)-octahydroindolizin-1-ol + CO2 + 3 NADP(+) + CoA + 2 H2O. It carries out the reaction L-pipecolate + malonyl-CoA + 3 NADPH + 5 H(+) = (1S,8aS)-octahydroindolizin-1-ol + CO2 + 3 NADP(+) + CoA + 2 H2O. Its pathway is mycotoxin biosynthesis. PKS-NRPS hybrid synthetase; part of the gene cluster that mediates the biosynthesis of swainsonine (SW), a cytotoxic fungal alkaloid and a potential cancer therapy drug. Swainsonine production occurs via a multibranched pathway and is dispensable for fungal colonization of plants and infection of insect hosts. The first step of swainsonine biosynthesis is the production of the precursor pipecolic acid (PA) via conversion of L-lysine (Lys) to 1-piperideine-6-carboxylate (P6C) by the aminotransferase swnA, the latter being further reduced to PA by the reductase swnR. PA can be converted from lysine by both the SW biosynthetic cluster and the unclustered genes such as lysine cyclodeaminase. The PKS-NRPS hybrid synthetase swnK uptakes and condensates PA and malonyl-CoA with and without skipping of the ketoreductase (KR) domain in order to produce 3 intermediates, 1-oxoindolizidine, (1S)-1-hydroxyindolizin, and (1R)-1-hydroxyindolizine; with the transisomer (1S)-1-hydroxyindolizin being predominant. The terminal thioester reductase (TE) domain of swnK is involved in reduction of the thioester bond to release the intermediate aldehydes. The oxidoreductase swnN could contribute to the reduction of 1-oxoindolizidine to (1S)-1-hydroxyindolizin and (1R)-1-hydroxyindolizine, contributing to the major route of SW production. The dioxygenase swnH2 would be responsible for the oxidization of (1R)-1-hydroxyindolizine into (1R,2S)-1,2-dihydroxyindolizine and of (1S)-1-hydroxyindolizin to yield both (1R,2S)-1,2-dihydroxyindolizine and (1S,2S)-1,2-dihydroxyindolizine. The dioxygenase swnH1 then performs the conversion of the 1,2-dihydroxyindolizine epimers to SW. This chain is PKS-NRPS hybrid synthetase swnK, found in Metarhizium robertsii (strain ARSEF 23 / ATCC MYA-3075) (Metarhizium anisopliae (strain ARSEF 23)).